Consider the following 430-residue polypeptide: Putative cytochrome P450 139 (430 aa).

Heme is bound at residue cysteine 372.

The protein belongs to the cytochrome P450 family. It depends on heme as a cofactor.

This Mycobacterium bovis (strain ATCC BAA-935 / AF2122/97) protein is Putative cytochrome P450 139 (cyp139).